A 115-amino-acid chain; its full sequence is NADH-ubiquinone oxidoreductase chain 3 (115 aa).

3 consecutive transmembrane segments (helical) span residues 4–24 (MLAMLINITLSLCLISLAFWL), 55–75 (FFLVGITFLLLDLEIALLLPL), and 84–104 (MITTTIVSLSLVSILALGLSY).

This sequence belongs to the complex I subunit 3 family. As to quaternary structure, core subunit of respiratory chain NADH dehydrogenase (Complex I) which is composed of 45 different subunits. Interacts with TMEM186. Interacts with TMEM242.

It is found in the mitochondrion inner membrane. The enzyme catalyses a ubiquinone + NADH + 5 H(+)(in) = a ubiquinol + NAD(+) + 4 H(+)(out). Its function is as follows. Core subunit of the mitochondrial membrane respiratory chain NADH dehydrogenase (Complex I) which catalyzes electron transfer from NADH through the respiratory chain, using ubiquinone as an electron acceptor. Essential for the catalytic activity of complex I. In Reithrodon auritus (Bunny rat), this protein is NADH-ubiquinone oxidoreductase chain 3.